A 133-amino-acid chain; its full sequence is Small ribosomal subunit protein uS8 (133 aa).

This sequence belongs to the universal ribosomal protein uS8 family. Part of the 30S ribosomal subunit. Contacts proteins S5 and S12.

Its function is as follows. One of the primary rRNA binding proteins, it binds directly to 16S rRNA central domain where it helps coordinate assembly of the platform of the 30S subunit. The protein is Small ribosomal subunit protein uS8 of Leptospira interrogans serogroup Icterohaemorrhagiae serovar copenhageni (strain Fiocruz L1-130).